Here is a 179-residue protein sequence, read N- to C-terminus: Repressor of phase 1 flagellin gene (179 aa).

In terms of biological role, transcriptional repressor of the FliC phase-1 flagellin. This Salmonella typhimurium (strain LT2 / SGSC1412 / ATCC 700720) protein is Repressor of phase 1 flagellin gene (fljA).